Consider the following 281-residue polypeptide: CDAN1-interacting nuclease 1 (281 aa).

The protein localises to the nucleus. It is found in the cytoplasm. In terms of biological role, plays a role in erythroid cell differentiation. The sequence is that of CDAN1-interacting nuclease 1 (CDIN1) from Bos taurus (Bovine).